The primary structure comprises 420 residues: Phosphoglycerate kinase, cytosolic (420 aa).

(2R)-3-phosphoglycerate contacts are provided by V23, D24, F25, N26, R39, S61, H62, G64, R65, R135, H171, and R172. G217 and A218 together coordinate ADP. A CDP-binding site is contributed by G217. Residues A218 and K219 each coordinate AMP. A218 lines the ATP pocket. Mg(2+) is bound at residue A218. Residue K219 participates in (2R)-3-phosphoglycerate binding. Residue D222 participates in CDP binding. Position 222 (D222) interacts with Mg(2+). ADP contacts are provided by K223 and G241. K223 serves as a coordination point for AMP. An ATP-binding site is contributed by K223. G241 serves as a coordination point for CDP. The AMP site is built by A242 and A314. Residues A242 and A314 each contribute to the ATP site. ADP-binding residues include A314 and N338. Residues G339 and F344 each contribute to the CDP site. ADP is bound by residues F344, E345, E377, and S378. E345 contacts AMP. Positions 345, 377, and 378 each coordinate ATP. Residue E377 coordinates Mg(2+).

This sequence belongs to the phosphoglycerate kinase family. In terms of assembly, monomer. Requires Mg(2+) as cofactor.

It localises to the cytoplasm. The catalysed reaction is (2R)-3-phosphoglycerate + ATP = (2R)-3-phospho-glyceroyl phosphate + ADP. It functions in the pathway carbohydrate degradation; glycolysis; pyruvate from D-glyceraldehyde 3-phosphate: step 2/5. The sequence is that of Phosphoglycerate kinase, cytosolic from Trypanosoma brucei brucei.